The chain runs to 403 residues: 3-hydroxy-3-methylglutaryl-coenzyme A reductase (403 aa).

Active-site charge relay system residues include Glu-99 and Asp-303. His-398 (proton donor) is an active-site residue.

It belongs to the HMG-CoA reductase family.

It carries out the reaction (R)-mevalonate + 2 NADP(+) + CoA = (3S)-3-hydroxy-3-methylglutaryl-CoA + 2 NADPH + 2 H(+). The protein operates within metabolic intermediate biosynthesis; (R)-mevalonate biosynthesis; (R)-mevalonate from acetyl-CoA: step 3/3. Its activity is regulated as follows. Is competitively inhibited by (R)-HMG-CoA and lovastatin (formerly called mevinolin). Its function is as follows. Catalyzes the NADPH-dependent reductive deacylation of (S)-3-hydroxy-3-methylglutaryl-CoA (HMG-CoA) to (R)-mevalonate. Functions in the mevalonate (MVA) pathway leading to isopentenyl diphosphate (IPP), a key precursor for the biosynthesis of isoprenoid compounds such as archaeal membrane lipids. Is also able to catalyze the reduction of mevaldehyde to mevalonate and the oxidative acylation of mevaldehyde to HMG-CoA. This chain is 3-hydroxy-3-methylglutaryl-coenzyme A reductase (hmgA), found in Haloferax volcanii (strain ATCC 29605 / DSM 3757 / JCM 8879 / NBRC 14742 / NCIMB 2012 / VKM B-1768 / DS2) (Halobacterium volcanii).